A 307-amino-acid polypeptide reads, in one-letter code: MGEQNHSPGKELQHRTRAEAPGKKSWHSQAYALGAVSNFMSTFLTFPIYKVVFRQQIHAMAVSEAVRQLWHEGPQYFYRGIYPPLLSKTLQGTLLFGTYDSLLCFLSPVGPHTLGHRWAAGLMSGVVEAVALSPFERVQNVLQDGRKQARFPSTFSILKEFNSYGLWGRLSLGYYRGFWPVLARNSLGSALYFSFKDPIQDGLAEQGLPHWVPALVSGSVNGTITCLVLYPLIVLVANMQSHIGWQNMPSLWASAQDVWNTRGRKLLLIYRGGSLVILRSSVTWGLTTAIHDFLQRKSHSRKELKTD.

The interval 1-23 (MGEQNHSPGKELQHRTRAEAPGK) is disordered. Residues 8 to 22 (PGKELQHRTRAEAPG) are compositionally biased toward basic and acidic residues. 3 Solcar repeats span residues 25–105 (SWHS…LLCF), 112–202 (HTLG…IQDG), and 210–302 (HWVP…HSRK). The next 6 helical transmembrane spans lie at 31-51 (YALGAVSNFMSTFLTFPIYKV), 82-102 (YPPLLSKTLQGTLLFGTYDSL), 112-132 (HTLGHRWAAGLMSGVVEAVAL), 181-201 (VLARNSLGSALYFSFKDPIQD), 215-235 (LVSGSVNGTITCLVLYPLIVL), and 269-290 (IYRGGSLVILRSSVTWGLTTAI).

Belongs to the mitochondrial carrier (TC 2.A.29) family.

It is found in the mitochondrion inner membrane. The polypeptide is Solute carrier family 25 member 53 (SLC25A53) (Homo sapiens (Human)).